A 516-amino-acid chain; its full sequence is Cytochrome P450 1A2 (516 aa).

Ser-69 carries O-linked (GlcNAc) serine glycosylation. Residue Phe-226 coordinates substrate. Cys-458 lines the heme pocket.

It belongs to the cytochrome P450 family. As to quaternary structure, interacts with PGRMC1; the interaction requires PGRMC1 homodimerization. Requires heme as cofactor. As to expression, liver.

The protein localises to the endoplasmic reticulum membrane. The protein resides in the microsome membrane. It catalyses the reaction an organic molecule + reduced [NADPH--hemoprotein reductase] + O2 = an alcohol + oxidized [NADPH--hemoprotein reductase] + H2O + H(+). The catalysed reaction is 17beta-estradiol + reduced [NADPH--hemoprotein reductase] + O2 = 2-hydroxy-17beta-estradiol + oxidized [NADPH--hemoprotein reductase] + H2O + H(+). It carries out the reaction 17beta-estradiol + reduced [NADPH--hemoprotein reductase] + O2 = 4-hydroxy-17beta-estradiol + oxidized [NADPH--hemoprotein reductase] + H2O + H(+). The enzyme catalyses estrone + reduced [NADPH--hemoprotein reductase] + O2 = 2-hydroxyestrone + oxidized [NADPH--hemoprotein reductase] + H2O + H(+). It catalyses the reaction estrone + reduced [NADPH--hemoprotein reductase] + O2 = 4-hydroxyestrone + oxidized [NADPH--hemoprotein reductase] + H2O + H(+). The catalysed reaction is cholesterol + reduced [NADPH--hemoprotein reductase] + O2 = 25-hydroxycholesterol + oxidized [NADPH--hemoprotein reductase] + H2O + H(+). It carries out the reaction all-trans-retinol + reduced [NADPH--hemoprotein reductase] + O2 = all-trans-retinal + oxidized [NADPH--hemoprotein reductase] + 2 H2O + H(+). The enzyme catalyses all-trans-retinal + reduced [NADPH--hemoprotein reductase] + O2 = all-trans-retinoate + oxidized [NADPH--hemoprotein reductase] + H2O + 2 H(+). It catalyses the reaction (5Z,8Z,11Z,14Z)-eicosatetraenoate + reduced [NADPH--hemoprotein reductase] + O2 = (14R,15S)-epoxy-(5Z,8Z,11Z)-eicosatrienoate + oxidized [NADPH--hemoprotein reductase] + H2O + H(+). The catalysed reaction is (5Z,8Z,11Z,14Z)-eicosatetraenoate + reduced [NADPH--hemoprotein reductase] + O2 = (14S,15R)-epoxy-(5Z,8Z,11Z)-eicosatrienoate + oxidized [NADPH--hemoprotein reductase] + H2O + H(+). It carries out the reaction (5Z,8Z,11Z,14Z,17Z)-eicosapentaenoate + reduced [NADPH--hemoprotein reductase] + O2 = (17R,18S)-epoxy-(5Z,8Z,11Z,14Z)-eicosatetraenoate + oxidized [NADPH--hemoprotein reductase] + H2O + H(+). The enzyme catalyses (4Z,7Z,10Z,13Z,16Z,19Z)-docosahexaenoate + reduced [NADPH--hemoprotein reductase] + O2 = (19R,20S)-epoxy-(4Z,7Z,10Z,13Z,16Z)-docosapentaenoate + oxidized [NADPH--hemoprotein reductase] + H2O + H(+). It catalyses the reaction (5S)-hydroperoxy-(6E,8Z,11Z,14Z)-eicosatetraenoate = 5-oxo-(6E,8Z,11Z,14Z)-eicosatetraenoate + H2O. The catalysed reaction is (12S)-hydroperoxy-(5Z,8Z,10E,14Z)-eicosatetraenoate = 12-oxo-(5Z,8Z,10E,14Z)-eicosatetraenoate + H2O. It carries out the reaction (15S)-hydroperoxy-(5Z,8Z,11Z,13E)-eicosatetraenoate = 15-oxo-(5Z,8Z,11Z,13E)-eicosatetraenoate + H2O. The enzyme catalyses (13S)-hydroperoxy-(9Z,11E)-octadecadienoate = 13-oxo-(9Z,11E)-octadecadienoate + H2O. It catalyses the reaction (5Z,8Z,11Z,14Z)-eicosatetraenoate + reduced [NADPH--hemoprotein reductase] + O2 = 13-hydroxy-(5Z,8Z,11Z,14Z)-eicosatetraenoate + oxidized [NADPH--hemoprotein reductase] + H2O + H(+). The catalysed reaction is (5Z,8Z,11Z,14Z)-eicosatetraenoate + reduced [NADPH--hemoprotein reductase] + O2 = 19-hydroxy-(5Z,8Z,11Z,14Z)-eicosatetraenoate + oxidized [NADPH--hemoprotein reductase] + H2O + H(+). It carries out the reaction (9Z,12Z)-octadecadienoate + reduced [NADPH--hemoprotein reductase] + O2 = 11-hydroxy-(9Z,12Z)-octadecadienoate + oxidized [NADPH--hemoprotein reductase] + H2O + H(+). It functions in the pathway cofactor metabolism; retinol metabolism. The protein operates within steroid metabolism; cholesterol metabolism. It participates in lipid metabolism; arachidonate metabolism. A cytochrome P450 monooxygenase involved in the metabolism of various endogenous substrates, including fatty acids, steroid hormones and vitamins. Mechanistically, uses molecular oxygen inserting one oxygen atom into a substrate, and reducing the second into a water molecule, with two electrons provided by NADPH via cytochrome P450 reductase (NADPH--hemoprotein reductase). Catalyzes the hydroxylation of carbon-hydrogen bonds. Exhibits high catalytic activity for the formation of hydroxyestrogens from estrone (E1) and 17beta-estradiol (E2), namely 2-hydroxy E1 and E2. Metabolizes cholesterol toward 25-hydroxycholesterol, a physiological regulator of cellular cholesterol homeostasis. May act as a major enzyme for all-trans retinoic acid biosynthesis in the liver. Catalyzes two successive oxidative transformation of all-trans retinol to all-trans retinal and then to the active form all-trans retinoic acid. Primarily catalyzes stereoselective epoxidation of the last double bond of polyunsaturated fatty acids (PUFA), displaying a strong preference for the (R,S) stereoisomer. Catalyzes bisallylic hydroxylation and omega-1 hydroxylation of PUFA. May also participate in eicosanoids metabolism by converting hydroperoxide species into oxo metabolites (lipoxygenase-like reaction, NADPH-independent). Plays a role in the oxidative metabolism of xenobiotics. Catalyzes the N-hydroxylation of heterocyclic amines and the O-deethylation of phenacetin. Metabolizes caffeine via N3-demethylation. This is Cytochrome P450 1A2 from Homo sapiens (Human).